The following is a 532-amino-acid chain: MEYTKSIAECIKAIEVVNCFGNDKSLINSVEYDSRKVRAYSYDDKTGLKKGAAFFALPGIHTDGKKFINSAIENGAVCIFYEGDLNNHSCDEICFVQVNDVRKTMSKVSALLYDEPSRTLGVIGVTGTEGKSSTVSFIFQLLNLCGKKAGFFSTVEYSIDGNVIPNPEHQTTPESNVVQLRLAQMRDSGCSYAVVEASSHGLSPKTARLEDVIFDAGVFMNVTQEHLEFHGTIEQYRYDKANLFRALDKNPGKGFPIFGIVNYEDPSAPYFMEATQKNVYPFSTELKDLKKIEEYKGLFAKDIEESSSGIKFTLCDFSSRKEYGCELKLAGIFNVKNILASVLAVQRITGLDIACIIEKLPLVKPVKGRMMLIDEGQDFEVLIDYAHTPSSFMTIFPSIKERIKKSGGKVISLFGSGGERDVKKRPEQGRIAALYSDIVILADEDPRGEDSVELLEMIAAGCPEKKRGEELFIIPDRPSAIKKAFSLAGKNDAVLLLGKGHENSIIFKDRTMPYDEETTARKLLIGADCTNP.

Serine 34 is a binding site for UDP-N-acetyl-alpha-D-muramoyl-L-alanyl-D-glutamate. Glycine 127 to serine 133 provides a ligand contact to ATP. UDP-N-acetyl-alpha-D-muramoyl-L-alanyl-D-glutamate-binding positions include threonine 171–threonine 172, serine 198, and arginine 208. An N6-carboxylysine modification is found at lysine 240.

It belongs to the MurCDEF family. MurE subfamily. In terms of processing, carboxylation is probably crucial for Mg(2+) binding and, consequently, for the gamma-phosphate positioning of ATP.

It is found in the cytoplasm. It participates in cell wall biogenesis; peptidoglycan biosynthesis. Functionally, catalyzes the addition of an amino acid to the nucleotide precursor UDP-N-acetylmuramoyl-L-alanyl-D-glutamate (UMAG) in the biosynthesis of bacterial cell-wall peptidoglycan. The polypeptide is UDP-N-acetylmuramyl-tripeptide synthetase (Treponema denticola (strain ATCC 35405 / DSM 14222 / CIP 103919 / JCM 8153 / KCTC 15104)).